A 247-amino-acid polypeptide reads, in one-letter code: tRNA pseudouridine synthase A (247 aa).

Residue Asp-52 is the Nucleophile of the active site. Tyr-110 serves as a coordination point for substrate.

It belongs to the tRNA pseudouridine synthase TruA family. As to quaternary structure, homodimer.

It catalyses the reaction uridine(38/39/40) in tRNA = pseudouridine(38/39/40) in tRNA. Formation of pseudouridine at positions 38, 39 and 40 in the anticodon stem and loop of transfer RNAs. The chain is tRNA pseudouridine synthase A from Geobacter sp. (strain M21).